A 619-amino-acid chain; its full sequence is 1-deoxy-D-xylulose-5-phosphate synthase (619 aa).

Residues H74 and G115–S117 each bind thiamine diphosphate. D146 is a Mg(2+) binding site. Thiamine diphosphate-binding positions include G147–A148, N175, and Y285. N175 is a binding site for Mg(2+). Residues E289–C312 form a disordered region. A compositionally biased stretch (basic and acidic residues) spans A302–C312. Thiamine diphosphate is bound at residue E365.

The protein belongs to the transketolase family. DXPS subfamily. Homodimer. The cofactor is Mg(2+). Requires thiamine diphosphate as cofactor.

It catalyses the reaction D-glyceraldehyde 3-phosphate + pyruvate + H(+) = 1-deoxy-D-xylulose 5-phosphate + CO2. It participates in metabolic intermediate biosynthesis; 1-deoxy-D-xylulose 5-phosphate biosynthesis; 1-deoxy-D-xylulose 5-phosphate from D-glyceraldehyde 3-phosphate and pyruvate: step 1/1. Catalyzes the acyloin condensation reaction between C atoms 2 and 3 of pyruvate and glyceraldehyde 3-phosphate to yield 1-deoxy-D-xylulose-5-phosphate (DXP). In Clostridium botulinum (strain Eklund 17B / Type B), this protein is 1-deoxy-D-xylulose-5-phosphate synthase.